Here is a 297-residue protein sequence, read N- to C-terminus: Lipoyl synthase (297 aa).

Positions 40, 45, 51, 67, 71, 74, and 280 each coordinate [4Fe-4S] cluster. Residues 53–269 (AVRKTATFMI…KEIALSKGFS (217 aa)) enclose the Radical SAM core domain.

The protein belongs to the radical SAM superfamily. Lipoyl synthase family. Requires [4Fe-4S] cluster as cofactor.

The protein localises to the cytoplasm. The enzyme catalyses [[Fe-S] cluster scaffold protein carrying a second [4Fe-4S](2+) cluster] + N(6)-octanoyl-L-lysyl-[protein] + 2 oxidized [2Fe-2S]-[ferredoxin] + 2 S-adenosyl-L-methionine + 4 H(+) = [[Fe-S] cluster scaffold protein] + N(6)-[(R)-dihydrolipoyl]-L-lysyl-[protein] + 4 Fe(3+) + 2 hydrogen sulfide + 2 5'-deoxyadenosine + 2 L-methionine + 2 reduced [2Fe-2S]-[ferredoxin]. It functions in the pathway protein modification; protein lipoylation via endogenous pathway; protein N(6)-(lipoyl)lysine from octanoyl-[acyl-carrier-protein]. Its function is as follows. Catalyzes the radical-mediated insertion of two sulfur atoms into the C-6 and C-8 positions of the octanoyl moiety bound to the lipoyl domains of lipoate-dependent enzymes, thereby converting the octanoylated domains into lipoylated derivatives. In Bacillus cereus (strain ATCC 14579 / DSM 31 / CCUG 7414 / JCM 2152 / NBRC 15305 / NCIMB 9373 / NCTC 2599 / NRRL B-3711), this protein is Lipoyl synthase.